The sequence spans 229 residues: Large ribosomal subunit protein uL1c (229 aa).

It belongs to the universal ribosomal protein uL1 family. In terms of assembly, part of the 50S ribosomal subunit.

Its subcellular location is the plastid. The protein localises to the chloroplast. Binds directly to 23S rRNA. Might be involved in E site tRNA release (Potential). The sequence is that of Large ribosomal subunit protein uL1c (rpl1) from Pyropia yezoensis (Susabi-nori).